Reading from the N-terminus, the 260-residue chain is Pectate lyase H (260 aa).

Positions methionine 1–alanine 17 are cleaved as a signal peptide.

Belongs to the polysaccharide lyase 3 family. Requires Ca(2+) as cofactor.

The protein resides in the secreted. The catalysed reaction is Eliminative cleavage of (1-&gt;4)-alpha-D-galacturonan to give oligosaccharides with 4-deoxy-alpha-D-galact-4-enuronosyl groups at their non-reducing ends.. Pectinolytic enzyme consist of four classes of enzymes: pectin lyase, polygalacturonase, pectin methylesterase and rhamnogalacturonase. Among pectinolytic enzymes, pectin lyase is the most important in depolymerization of pectin, since it cleaves internal glycosidic bonds of highly methylated pectins. Favors pectate, the anion, over pectin, the methyl ester. This chain is Pectate lyase H (plyH), found in Emericella nidulans (strain FGSC A4 / ATCC 38163 / CBS 112.46 / NRRL 194 / M139) (Aspergillus nidulans).